Consider the following 626-residue polypeptide: Polyphenol oxidase C, chloroplastic (626 aa).

Residues 1–83 constitute a chloroplast transit peptide; the sequence is MASLCSNSST…ANAIPLAASA (83 aa). Cystine bridges form between Cys94–Cys110 and Cys109–Cys177. His176, His194, His203, His324, His328, and His366 together coordinate Cu cation. Residues 180–194 constitute a cross-link (2'-(S-cysteinyl)-histidine (Cys-His)); the sequence is CNGGYSIDGKVLQVH.

This sequence belongs to the tyrosinase family. Requires Cu(2+) as cofactor.

Its subcellular location is the plastid. The protein localises to the chloroplast thylakoid lumen. The enzyme catalyses 2 catechol + O2 = 2 1,2-benzoquinone + 2 H2O. Catalyzes the oxidation of mono- and o-diphenols to o-diquinones. This is Polyphenol oxidase C, chloroplastic from Solanum lycopersicum (Tomato).